The chain runs to 164 residues: Transcriptional repressor NrdR (164 aa).

The segment at 3 to 34 (CPKCNYNKSSVVDSRQAEDGNTIRRRRECEKC) is a zinc-finger region. One can recognise an ATP-cone domain in the interval 49 to 139 (LLVVKKDGTR…VYKSFKDVDE (91 aa)).

The protein belongs to the NrdR family. It depends on Zn(2+) as a cofactor.

Negatively regulates transcription of bacterial ribonucleotide reductase nrd genes and operons by binding to NrdR-boxes. This chain is Transcriptional repressor NrdR, found in Streptococcus uberis (strain ATCC BAA-854 / 0140J).